Here is a 237-residue protein sequence, read N- to C-terminus: Ferritin, mitochondrial (237 aa).

A mitochondrion-targeting transit peptide spans 1-49 (MLSCFWFFSKHISSALMSLPRVLHRFTAPQCLASRYPLGPLLASPRRLL). Positions 66–215 (QNFHPDSEAA…DHVHNLVTMG (150 aa)) constitute a Ferritin-like diiron domain. E83, E118, H121, E163, and Q197 together coordinate Fe cation.

The protein belongs to the ferritin family. As to quaternary structure, homooligomer of 24 subunits. The functional molecule is roughly spherical and contains a central cavity into which the polymeric mineral iron core is deposited.

Its subcellular location is the mitochondrion. It carries out the reaction 4 Fe(2+) + O2 + 4 H(+) = 4 Fe(3+) + 2 H2O. Functionally, catalyzes the oxidation of ferrous iron(II) to ferric iron(III) and stores iron in a soluble, non-toxic, readily available form. Important for iron homeostasis. Iron is taken up in the ferrous form and deposited as ferric hydroxides after oxidation. The sequence is that of Ferritin, mitochondrial from Mus musculus (Mouse).